An 86-amino-acid chain; its full sequence is Large ribosomal subunit protein bL27 (86 aa).

Residues 1-20 (MAHKKAGGSSRNGRDSESKR) form a disordered region.

The protein belongs to the bacterial ribosomal protein bL27 family.

This Paraburkholderia phymatum (strain DSM 17167 / CIP 108236 / LMG 21445 / STM815) (Burkholderia phymatum) protein is Large ribosomal subunit protein bL27.